A 394-amino-acid polypeptide reads, in one-letter code: Sugar efflux transporter C (394 aa).

Topologically, residues 1–10 are periplasmic; that stretch reads MQKTATTPSK. A helical membrane pass occupies residues 11 to 31; it reads ILDLTAAAFLLVAFLTGIAGA. Residues 32 to 49 are Cytoplasmic-facing; that stretch reads LQTPTLSIFLADELKARP. The chain crosses the membrane as a helical span at residues 50–70; the sequence is IMVGFFFTGSAIMGILVSQFL. Residues 71-80 lie on the Periplasmic side of the membrane; the sequence is ARHSDKQGDR. A helical membrane pass occupies residues 81-101; the sequence is KLLILLCCLFGVLACTLFAWN. The Cytoplasmic portion of the chain corresponds to 102-104; the sequence is RNY. Residues 105-125 form a helical membrane-spanning segment; sequence FILLSTGVLLSSFASTANPQM. Over 126–150 the chain is Periplasmic; it reads FALAREHADRTGRETVMFSTFLRAQ. Residues 151-171 traverse the membrane as a helical segment; that stretch reads ISLAWVIGPPLAYELAMGFSF. Lys-172 is a topological domain (cytoplasmic). Residues 173–193 form a helical membrane-spanning segment; it reads VMYLTAAIAFVVCGLIVWLFL. Residues 194–224 are Periplasmic-facing; that stretch reads PSIQRNIPVVTQPVEILPSTHRKRDTRLLFV. A helical membrane pass occupies residues 225–245; that stretch reads VCSMMWAANNLYMINMPLFII. The Cytoplasmic portion of the chain corresponds to 246-253; that stretch reads DELHLTDK. A helical transmembrane segment spans residues 254–274; it reads LTGEMIGIAAGLEIPMMLIAG. At 275–283 the chain is on the periplasmic side; the sequence is YYMKRIGKR. A helical transmembrane segment spans residues 284 to 304; sequence LLMLIAIVSGMCFYASVLMAT. Residues 305 to 310 lie on the Cytoplasmic side of the membrane; the sequence is TPAVEL. Residues 311-331 traverse the membrane as a helical segment; the sequence is ELQILNAIFLGILCGIGMLYF. Over 332 to 370 the chain is Periplasmic; it reads QDLMPEKIGSATTLYANTSRVGWIIAGSVDGIMVEIWSY. A helical transmembrane segment spans residues 371-391; the sequence is HALFWLAIGMLGIAMICLLFI. At 392–394 the chain is on the cytoplasmic side; that stretch reads KDI.

The protein belongs to the major facilitator superfamily. Set transporter family.

Its subcellular location is the cell inner membrane. In terms of biological role, involved in the efflux of sugars. The physiological role may be the detoxification of non-metabolizable sugar analogs. The polypeptide is Sugar efflux transporter C (setC) (Escherichia coli (strain K12)).